The sequence spans 326 residues: Adenosine receptor A1 (326 aa).

Topologically, residues 1 to 10 are extracellular; the sequence is MPPSISAFQA. Residues 11-33 form a helical membrane-spanning segment; it reads AYIGIEVLIALVSVPGNVLVIWA. Over 34–46 the chain is Cytoplasmic; it reads VKVNQALRDATFC. The helical transmembrane segment at 47 to 69 threads the bilayer; it reads FIVSLAVADVAVGALVIPLAILI. Residues 70-80 lie on the Extracellular side of the membrane; sequence NIGPRTYFHTC. A disulfide bridge connects residues Cys-80 and Cys-169. Residues 81 to 102 traverse the membrane as a helical segment; the sequence is LKVACPVLILTQSSILALLAIA. Topologically, residues 103–123 are cytoplasmic; that stretch reads VDRYLRVKIPLRYKTVVTPRR. Residues 124–146 form a helical membrane-spanning segment; that stretch reads AVVAITGCWILSFVVGLTPMFGW. The Extracellular portion of the chain corresponds to 147-176; that stretch reads NNLSAVERDWLANGSVGEPVIECQFEKVIS. Asn-148 and Asn-159 each carry an N-linked (GlcNAc...) asparagine glycan. The chain crosses the membrane as a helical span at residues 177-201; it reads MEYMVYFNFFVWVLPPLLLMVLIYM. Residues 202–235 are Cytoplasmic-facing; it reads EVFYLIRKQLNKKVSASSGDPQKYYGKELKIAKS. The chain crosses the membrane as a helical span at residues 236–259; the sequence is LALILFLFALSWLPLHILNCITLF. The Extracellular segment spans residues 260 to 267; sequence CPSCHMPR. A helical membrane pass occupies residues 268 to 292; sequence ILIYIAIFLSHGNSAMNPIVYAFRI. Residues 293–326 lie on the Cytoplasmic side of the membrane; sequence QKFRVTFLKIWNDHFRCQPAPPVDEDAPAERPDD. Cys-309 is lipidated: S-palmitoyl cysteine.

It belongs to the G-protein coupled receptor 1 family.

The protein localises to the cell membrane. Its function is as follows. Receptor for adenosine. The activity of this receptor is mediated by G proteins which inhibit adenylyl cyclase. The polypeptide is Adenosine receptor A1 (ADORA1) (Bos taurus (Bovine)).